Reading from the N-terminus, the 201-residue chain is Ciliary microtubule inner protein 2C (201 aa).

It belongs to the CIMIP2 family. Microtubule inner protein component of sperm flagellar doublet microtubules. Expressed in airway epithelial cells.

It localises to the cytoplasm. It is found in the cytoskeleton. The protein localises to the cilium axoneme. The protein resides in the flagellum axoneme. Functionally, microtubule inner protein (MIP) part of the dynein-decorated doublet microtubules (DMTs) in cilia axoneme, which is required for motile cilia beating. Binds to the intra-tubulin interfaces. The protein is Ciliary microtubule inner protein 2C of Homo sapiens (Human).